Reading from the N-terminus, the 481-residue chain is Transmembrane protein 39A (481 aa).

Transmembrane regions (helical) follow at residues 74 to 94, 109 to 129, 150 to 170, 182 to 202, 278 to 298, 313 to 333, 411 to 431, and 437 to 457; these read LFETLLLLYLLVALLVQYINI, STSLNFHLMDAHLAVFIAVML, LCYVLLLVVRVCVLTLCGWVL, SVLKLLFLGYPFGVYVPLCCL, EVLFNSLLSAYYVAFLPLCFV, LIMVWINAFVMLMSHLLPPHY, LLNVLIGIECSVVVYQLYSLL, and NHTLSLGLILVCNYYVLFKLL.

The protein belongs to the TMEM39 family.

Its subcellular location is the endoplasmic reticulum membrane. Regulates autophagy by controlling the spatial distribution and levels of the intracellular phosphatidylinositol 4-phosphate (PtdIns(4)P) pools. Modulates (PtdIns(4)P) levels by regulating the ER-to-Golgi trafficking of the phosphatidylinositide phosphatase SACM1L. This chain is Transmembrane protein 39A (tmem39a), found in Danio rerio (Zebrafish).